Reading from the N-terminus, the 285-residue chain is Elongation factor Ts (285 aa).

Residues 82-85 (TDFV) form an involved in Mg(2+) ion dislocation from EF-Tu region.

The protein belongs to the EF-Ts family.

The protein resides in the cytoplasm. Its function is as follows. Associates with the EF-Tu.GDP complex and induces the exchange of GDP to GTP. It remains bound to the aminoacyl-tRNA.EF-Tu.GTP complex up to the GTP hydrolysis stage on the ribosome. This is Elongation factor Ts from Yersinia pseudotuberculosis serotype O:1b (strain IP 31758).